Here is a 92-residue protein sequence, read N- to C-terminus: Bombyxin A-6 (92 aa).

The N-terminal stretch at 1–19 (MKILLAIALMLSTVMWVST) is a signal peptide. A Pyrrolidone carboxylic acid modification is found at Gln-20. Cystine bridges form between Cys-29–Cys-79, Cys-41–Cys-92, and Cys-78–Cys-83. A propeptide spans 50–70 (SGAQFASYGSAWLMPYSEGRG) (c peptide like).

This sequence belongs to the insulin family. Heterodimer of a B chain and an A chain linked by two disulfide bonds.

The protein resides in the secreted. Brain peptide responsible for activation of prothoracic glands to produce ecdysone in insects. This Bombyx mori (Silk moth) protein is Bombyxin A-6 (BBXA6).